The sequence spans 156 residues: D-aminoacyl-tRNA deacylase (156 aa).

Residues 142-143 (GP) carry the Gly-cisPro motif, important for rejection of L-amino acids motif.

It belongs to the DTD family. Homodimer.

It localises to the cytoplasm. It carries out the reaction glycyl-tRNA(Ala) + H2O = tRNA(Ala) + glycine + H(+). The catalysed reaction is a D-aminoacyl-tRNA + H2O = a tRNA + a D-alpha-amino acid + H(+). Its function is as follows. An aminoacyl-tRNA editing enzyme that deacylates mischarged D-aminoacyl-tRNAs. Also deacylates mischarged glycyl-tRNA(Ala), protecting cells against glycine mischarging by AlaRS. Acts via tRNA-based rather than protein-based catalysis; rejects L-amino acids rather than detecting D-amino acids in the active site. By recycling D-aminoacyl-tRNA to D-amino acids and free tRNA molecules, this enzyme counteracts the toxicity associated with the formation of D-aminoacyl-tRNA entities in vivo and helps enforce protein L-homochirality. This Cupriavidus pinatubonensis (strain JMP 134 / LMG 1197) (Cupriavidus necator (strain JMP 134)) protein is D-aminoacyl-tRNA deacylase.